A 24-amino-acid polypeptide reads, in one-letter code: Coenzyme PQQ synthesis protein A (24 aa).

A cross-link (pyrroloquinoline quinone (Glu-Tyr)) is located at residues 16-20; sequence EVTMY.

This sequence belongs to the PqqA family.

It functions in the pathway cofactor biosynthesis; pyrroloquinoline quinone biosynthesis. Required for coenzyme pyrroloquinoline quinone (PQQ) biosynthesis. PQQ is probably formed by cross-linking a specific glutamate to a specific tyrosine residue and excising these residues from the peptide. In Pseudomonas syringae pv. syringae (strain B728a), this protein is Coenzyme PQQ synthesis protein A.